Consider the following 438-residue polypeptide: Phosphoribosylamine--glycine ligase (438 aa).

The ATP-grasp domain maps to 108–316 (REFMERNNIP…LLEIAKGIVE (209 aa)). Position 135-194 (135-194 (IDEYGKPVVVKPLGLTGGKGVKVVGYQLKDNEEAKEYAEHIIRKDGKVLIEERTDGVEFT)) interacts with ATP. Residues Gln-274, Glu-286, and Asn-288 each coordinate Mg(2+). Gln-274, Glu-286, and Asn-288 together coordinate Mn(2+).

This sequence belongs to the GARS family. Mg(2+) serves as cofactor. The cofactor is Mn(2+).

It carries out the reaction 5-phospho-beta-D-ribosylamine + glycine + ATP = N(1)-(5-phospho-beta-D-ribosyl)glycinamide + ADP + phosphate + H(+). It functions in the pathway purine metabolism; IMP biosynthesis via de novo pathway; N(1)-(5-phospho-D-ribosyl)glycinamide from 5-phospho-alpha-D-ribose 1-diphosphate: step 2/2. The protein is Phosphoribosylamine--glycine ligase of Pyrococcus horikoshii (strain ATCC 700860 / DSM 12428 / JCM 9974 / NBRC 100139 / OT-3).